We begin with the raw amino-acid sequence, 102 residues long: ATP-dependent Clp protease adapter protein ClpS (102 aa).

This sequence belongs to the ClpS family. Binds to the N-terminal domain of the chaperone ClpA.

Functionally, involved in the modulation of the specificity of the ClpAP-mediated ATP-dependent protein degradation. This Dechloromonas aromatica (strain RCB) protein is ATP-dependent Clp protease adapter protein ClpS.